A 185-amino-acid polypeptide reads, in one-letter code: Ribosome-recycling factor (185 aa).

Belongs to the RRF family.

The protein resides in the cytoplasm. Functionally, responsible for the release of ribosomes from messenger RNA at the termination of protein biosynthesis. May increase the efficiency of translation by recycling ribosomes from one round of translation to another. In Salmonella arizonae (strain ATCC BAA-731 / CDC346-86 / RSK2980), this protein is Ribosome-recycling factor.